The primary structure comprises 453 residues: Cysteine--tRNA ligase (453 aa).

Residue Cys-30 participates in Zn(2+) binding. Positions Pro-32–Asn-42 match the 'HIGH' region motif. Zn(2+)-binding residues include Cys-212, His-237, and Glu-241. Residues Lys-268–Ser-272 carry the 'KMSKS' region motif. ATP is bound at residue Lys-271.

The protein belongs to the class-I aminoacyl-tRNA synthetase family. In terms of assembly, monomer. Requires Zn(2+) as cofactor.

Its subcellular location is the cytoplasm. It catalyses the reaction tRNA(Cys) + L-cysteine + ATP = L-cysteinyl-tRNA(Cys) + AMP + diphosphate. This chain is Cysteine--tRNA ligase, found in Jannaschia sp. (strain CCS1).